Here is a 232-residue protein sequence, read N- to C-terminus: MSNVDHAEIAKFEALAHRWWDRESEFKPLHDINPLRVNWIDERVNLAGKKVLDVGCGGGILSEAMAQRGATVMGIDMGEAPLAVAQLHQLESGVSVEYRQITAEALAEEMPEQFDVVTCLEMLEHVPDPSSVIRACFRMVKPGGQVFFSTINRNPKAYLFAIIGAEYIMKLLPRGTHDFKKFIRPSELGAWSRQAGLTVKDIIGLTYNPLTKHYKLASDVDVNYMIQTLREE.

Arginine 36, glycine 55, aspartate 76, and leucine 120 together coordinate S-adenosyl-L-methionine.

This sequence belongs to the methyltransferase superfamily. UbiG/COQ3 family.

It catalyses the reaction a 3-demethylubiquinol + S-adenosyl-L-methionine = a ubiquinol + S-adenosyl-L-homocysteine + H(+). The catalysed reaction is a 3-(all-trans-polyprenyl)benzene-1,2-diol + S-adenosyl-L-methionine = a 2-methoxy-6-(all-trans-polyprenyl)phenol + S-adenosyl-L-homocysteine + H(+). It participates in cofactor biosynthesis; ubiquinone biosynthesis. O-methyltransferase that catalyzes the 2 O-methylation steps in the ubiquinone biosynthetic pathway. The protein is Ubiquinone biosynthesis O-methyltransferase of Pseudomonas fluorescens (strain SBW25).